The primary structure comprises 957 residues: Calsyntenin-3 (957 aa).

A signal peptide spans 1–19 (MTLLLVSLLLASLLQISSG). Residues 1–21 (MTLLLVSLLLASLLQISSGNK) lie on the Cytoplasmic side of the membrane. Residues 20–848 (NKANKHKPWI…SHRNSMVPSA (829 aa)) are Extracellular-facing. An intramembrane region (helical) is located at residues 22–42 (ANKHKPWIEAEYQGIVMENDN). 2 Cadherin domains span residues 29–145 (IEAE…APVF) and 146–246 (VERL…KPSW). Residues 43–73 (TVLLNPPLFALDKDAPLRYAGEICGFRLHGS) are Cytoplasmic-facing. Positions 74 to 94 (GVPFKAVILDKATGEGLIRAK) form an intramembrane region, helical. Over 95–139 (EPVDCEAQKEHTFTTQAYDCVDGPDGANTKKSHKATVHVRVNDVN) the chain is Cytoplasmic. The helical intramembrane region spans 140–160 (EFAPVFVERLYRAAVTEGKLY). Over 161-248 (DRILRVEAID…KPTCKPSWQG (88 aa)) the chain is Cytoplasmic. Residues 249–269 (WNKRIEYAPGAGSLALFPGIR) form a helical membrane-spanning segment. Over 270-357 (LETCDEPLWN…GTQAVQVPLG (88 aa)) the chain is Lumenal. N-linked (GlcNAc...) asparagine glycans are attached at residues asparagine 299, asparagine 327, asparagine 347, asparagine 508, and asparagine 741. Residues 849–869 (ATLIIVVCVGFLVLMVILGLV) traverse the membrane as a helical segment. Topologically, residues 870-957 (RIHSLHRRVS…RIIESPPHRY (88 aa)) are cytoplasmic. Residues 916–957 (QQTGVAGVAGGQQEEEDSSDSEAADSPSSDERRIIESPPHRY) form a disordered region. Residues 928-938 (QEEEDSSDSEA) show a composition bias toward acidic residues. Basic and acidic residues predominate over residues 944 to 957 (SDERRIIESPPHRY).

Belongs to the calsyntenin family. In terms of assembly, interacts (via cadherin domains) with both alpha and beta isoforms of neurexins (NRXN1, NRXN2 and NRXN3). Directly interacts with APBA2. Forms a tripartite complex with APBA2 and APP. Interacts with low affinity with KLC1. Interacts with SLC23A2/SVCT2. Interacts with CIDEA; inhibiting the lipid transferase activity of CIDEA. Interacts with CIDEC; inhibiting the lipid transferase activity of CIDEC. Post-translationally, proteolytically processed under normal cellular conditions. A primary zeta-cleavage generates a large extracellular (soluble) N-terminal domain (sAlc) and a short C-terminal transmembrane fragment (CTF1). A secondary cleavage catalyzed by gamma-secretase within the transmembrane domain releases the beta-Alc-beta chain in the extracellular milieu and produces an intracellular fragment (AlcICD). This processing is strongly suppressed in the tripartite complex formed with APBA2 and APP, which seems to prevent the association with gamma-secretase. In terms of processing, ubiquitinated: endoplasmic reticulum-localized protein is ubiquitinated and degraded by the endoplasmic reticulum-associated degradation (ERAD) pathway.

Its subcellular location is the postsynaptic cell membrane. The protein resides in the endoplasmic reticulum membrane. It is found in the golgi apparatus membrane. It localises to the cell projection. The protein localises to the dendrite. Its subcellular location is the lipid droplet. Functionally, postsynaptic adhesion molecule that binds to presynaptic neurexins to mediate both excitatory and inhibitory synapse formation. Promotes synapse development by acting as a cell adhesion molecule at the postsynaptic membrane, which associates with both neurexin-alpha and neurexin-beta proteins at the presynaptic membrane. Regulates the balance between excitatory and inhibitory synapses by inhibiting formation of excitatory parallel-fiber synapses and promoting formation of inhibitory synapses in the same neuron. May also be involved in ascorbate (vitamin C) uptake via its interaction with SLC23A2/SVCT2. Complex formation with APBA2 and APP, stabilizes APP metabolism and enhances APBA2-mediated suppression of beta-APP40 secretion, due to the retardation of intracellular APP maturation. Adipose-specific isoform that plays a key role in adaptive thermogenesis. Facilitates the efficient use of stored triglyceride by promoting multilocular morphology of thermogenic adipocytes: acts by inhibiting the activity of CIDEA and CIDEC on lipid droplets, thereby preventing lipid droplet fusion and facilitating lipid utilization. May also participate in adaptive thermogenesis by promoting sympathetic innervation of thermogenic adipose tissue: acts by driving secretion of neurotrophic factor S100B from brown adipocytes, stimulating neurite outgrowth from sympathetic neurons. This is Calsyntenin-3 from Rattus norvegicus (Rat).